Consider the following 60-residue polypeptide: Potassium channel toxin alpha-KTx 12.5 (60 aa).

Residues 1–22 (MNKLPILIFMLLVCSMFISSDC) form the signal peptide. 3 cysteine pairs are disulfide-bonded: C30–C51, C36–C56, and C40–C58.

This sequence belongs to the short scorpion toxin superfamily. Potassium channel inhibitor family. Alpha-KTx 12 subfamily. In terms of tissue distribution, expressed by the venom gland.

Its subcellular location is the secreted. In terms of biological role, this recombinant toxin inhibits the mammalian voltage-gated potassium channels Kv1.3/KCNA3 (IC(50)=28 nM). Kv1.1/KCNA1 and Kv1.2/KCNA2 potassium channels are also weakly inhibited (IC(50)=1.73 uM and IC(50)=12.63 uM, respectively). The protein is Potassium channel toxin alpha-KTx 12.5 of Lychas mucronatus (Chinese swimming scorpion).